Here is a 199-residue protein sequence, read N- to C-terminus: GTP cyclohydrolase 1 (199 aa).

3 residues coordinate Zn(2+): C89, H92, and C161.

It belongs to the GTP cyclohydrolase I family. In terms of assembly, toroid-shaped homodecamer, composed of two pentamers of five dimers.

It carries out the reaction GTP + H2O = 7,8-dihydroneopterin 3'-triphosphate + formate + H(+). It participates in cofactor biosynthesis; 7,8-dihydroneopterin triphosphate biosynthesis; 7,8-dihydroneopterin triphosphate from GTP: step 1/1. The sequence is that of GTP cyclohydrolase 1 from Bifidobacterium longum (strain NCC 2705).